Reading from the N-terminus, the 233-residue chain is Translation initiation factor IF-3 (233 aa).

2 disordered regions span residues 1–21 and 184–233; these read MAIQ…RTNR and LQSQ…AAQR. Low complexity predominate over residues 193–211; the sequence is AAAAAAPAAAPAAPAAGAP. Over residues 212–223 the composition is skewed to pro residues; that stretch reads APAPAPAAPAPA. Over residues 224-233 the composition is skewed to low complexity; that stretch reads PAAADPAAQR.

Belongs to the IF-3 family. Monomer.

Its subcellular location is the cytoplasm. In terms of biological role, IF-3 binds to the 30S ribosomal subunit and shifts the equilibrium between 70S ribosomes and their 50S and 30S subunits in favor of the free subunits, thus enhancing the availability of 30S subunits on which protein synthesis initiation begins. This Anaeromyxobacter dehalogenans (strain 2CP-C) protein is Translation initiation factor IF-3.